The primary structure comprises 383 residues: Putative glutamate--cysteine ligase 2-1 (383 aa).

This sequence belongs to the glutamate--cysteine ligase type 2 family. YbdK subfamily.

The catalysed reaction is L-cysteine + L-glutamate + ATP = gamma-L-glutamyl-L-cysteine + ADP + phosphate + H(+). ATP-dependent carboxylate-amine ligase which exhibits weak glutamate--cysteine ligase activity. This Legionella pneumophila (strain Corby) protein is Putative glutamate--cysteine ligase 2-1.